Consider the following 273-residue polypeptide: uncharacterized protein (273 aa).

This is an uncharacterized protein from Mycobacterium bovis (strain ATCC BAA-935 / AF2122/97).